A 254-amino-acid polypeptide reads, in one-letter code: Glucosamine-6-phosphate deaminase (254 aa).

Catalysis depends on Asp63, which acts as the Proton acceptor; for enolization step. Residue Asn129 is the For ring-opening step of the active site. His131 serves as the catalytic Proton acceptor; for ring-opening step. Glu136 serves as the catalytic For ring-opening step.

The protein belongs to the glucosamine/galactosamine-6-phosphate isomerase family. NagB subfamily.

The enzyme catalyses alpha-D-glucosamine 6-phosphate + H2O = beta-D-fructose 6-phosphate + NH4(+). It functions in the pathway amino-sugar metabolism; N-acetylneuraminate degradation; D-fructose 6-phosphate from N-acetylneuraminate: step 5/5. In terms of biological role, catalyzes the reversible isomerization-deamination of glucosamine 6-phosphate (GlcN6P) to form fructose 6-phosphate (Fru6P) and ammonium ion. The protein is Glucosamine-6-phosphate deaminase of Exiguobacterium sp. (strain ATCC BAA-1283 / AT1b).